Consider the following 597-residue polypeptide: DNA ligase (597 aa).

Residue glutamate 262 participates in ATP binding. The N6-AMP-lysine intermediate role is filled by lysine 264. Residues arginine 269, arginine 284, glutamate 314, phenylalanine 354, arginine 431, and lysine 437 each coordinate ATP.

It belongs to the ATP-dependent DNA ligase family. Mg(2+) is required as a cofactor. Requires Mn(2+) as cofactor.

The catalysed reaction is ATP + (deoxyribonucleotide)n-3'-hydroxyl + 5'-phospho-(deoxyribonucleotide)m = (deoxyribonucleotide)n+m + AMP + diphosphate.. It carries out the reaction ADP + (deoxyribonucleotide)n-3'-hydroxyl + 5'-phospho-(deoxyribonucleotide)m = (deoxyribonucleotide)n+m + AMP + phosphate.. The enzyme catalyses GTP + (deoxyribonucleotide)n-3'-hydroxyl + 5'-phospho-(deoxyribonucleotide)m = (deoxyribonucleotide)n+m + GMP + diphosphate.. Its activity is regulated as follows. Inhibited by Ca(2+) and Zn(2+). Functionally, DNA ligase that seals nicks in double-stranded DNA during DNA replication, DNA recombination and DNA repair. Can use both ATP and ADP. The protein is DNA ligase of Staphylothermus marinus (strain ATCC 43588 / DSM 3639 / JCM 9404 / F1).